A 423-amino-acid polypeptide reads, in one-letter code: Glycine amidinotransferase, mitochondrial (423 aa).

The transit peptide at 1-48 directs the protein to the mitochondrion; it reads MLRVRCLRGGSRGAEAVHYIGSRLGRTLTGWVQRTFQSTQAATASSRN. Positions 39–51 are enriched in low complexity; it reads TQAATASSRNSSA. Residues 39-65 are disordered; the sequence is TQAATASSRNSSAADDKATEPLPKDCP. A phosphoserine mark is found at Ser-46 and Ser-49. Positions 52-61 are enriched in basic and acidic residues; sequence ADDKATEPLP. Arginine is bound at residue Asp-170. Residues Asp-254 and His-303 contribute to the active site. Residues Asp-305, Arg-322, Ser-354, and Ser-355 each coordinate arginine. Lys-385 carries the post-translational modification N6-acetyllysine. Cys-407 functions as the Amidino-cysteine intermediate in the catalytic mechanism.

The protein belongs to the amidinotransferase family. Homodimer.

Its subcellular location is the mitochondrion inner membrane. The catalysed reaction is L-arginine + glycine = guanidinoacetate + L-ornithine. The enzyme catalyses 4-aminobutanoate + L-arginine = 4-guanidinobutanoate + L-ornithine. It catalyses the reaction beta-alanine + L-arginine = 3-guanidinopropanoate + L-ornithine. It carries out the reaction taurine + L-arginine = taurocyamine + L-ornithine. Its pathway is amine and polyamine biosynthesis; creatine biosynthesis; creatine from L-arginine and glycine: step 1/2. Functionally, transamidinase that catalyzes the transfer of the amidino group of L-arginine onto the amino moiety of acceptor metabolites such as glycine, beta-alanine, gamma-aminobutyric acid (GABA) and taurine yielding the corresponding guanidine derivatives. Catalyzes the rate-limiting step of creatine biosynthesis, namely the transfer of the amidino group from L-arginine to glycine to generate guanidinoacetate, which is then methylated by GAMT to form creatine. Provides creatine as a source for ATP generation in tissues with high energy demands, in particular skeletal muscle, heart and brain. The polypeptide is Glycine amidinotransferase, mitochondrial (GATM) (Pongo abelii (Sumatran orangutan)).